A 185-amino-acid chain; its full sequence is Elongation factor P (185 aa).

It belongs to the elongation factor P family.

It localises to the cytoplasm. Its pathway is protein biosynthesis; polypeptide chain elongation. Functionally, involved in peptide bond synthesis. Stimulates efficient translation and peptide-bond synthesis on native or reconstituted 70S ribosomes in vitro. Probably functions indirectly by altering the affinity of the ribosome for aminoacyl-tRNA, thus increasing their reactivity as acceptors for peptidyl transferase. This Bacillus velezensis (strain DSM 23117 / BGSC 10A6 / LMG 26770 / FZB42) (Bacillus amyloliquefaciens subsp. plantarum) protein is Elongation factor P.